A 156-amino-acid polypeptide reads, in one-letter code: S-ribosylhomocysteine lyase (156 aa).

3 residues coordinate Fe cation: histidine 54, histidine 58, and cysteine 123.

It belongs to the LuxS family. As to quaternary structure, homodimer. Fe cation is required as a cofactor.

The catalysed reaction is S-(5-deoxy-D-ribos-5-yl)-L-homocysteine = (S)-4,5-dihydroxypentane-2,3-dione + L-homocysteine. In terms of biological role, involved in the synthesis of autoinducer 2 (AI-2) which is secreted by bacteria and is used to communicate both the cell density and the metabolic potential of the environment. The regulation of gene expression in response to changes in cell density is called quorum sensing. Catalyzes the transformation of S-ribosylhomocysteine (RHC) to homocysteine (HC) and 4,5-dihydroxy-2,3-pentadione (DPD). The polypeptide is S-ribosylhomocysteine lyase (Ligilactobacillus salivarius (strain UCC118) (Lactobacillus salivarius)).